A 441-amino-acid polypeptide reads, in one-letter code: NADH-quinone oxidoreductase subunit D (441 aa).

This sequence belongs to the complex I 49 kDa subunit family. NDH-1 is composed of 14 different subunits. Subunits NuoB, C, D, E, F, and G constitute the peripheral sector of the complex.

Its subcellular location is the cell membrane. It carries out the reaction a quinone + NADH + 5 H(+)(in) = a quinol + NAD(+) + 4 H(+)(out). Functionally, NDH-1 shuttles electrons from NADH, via FMN and iron-sulfur (Fe-S) centers, to quinones in the respiratory chain. The immediate electron acceptor for the enzyme in this species is believed to be a menaquinone. Couples the redox reaction to proton translocation (for every two electrons transferred, four hydrogen ions are translocated across the cytoplasmic membrane), and thus conserves the redox energy in a proton gradient. This chain is NADH-quinone oxidoreductase subunit D, found in Mycobacterium avium (strain 104).